The chain runs to 400 residues: Probable glucan endo-1,6-beta-glucosidase B (400 aa).

A signal peptide spans 1–17 (MIRRLAALSALSGLATA). Asparagine 30 is a glycosylation site (N-linked (GlcNAc...) asparagine). Glutamate 219 serves as the catalytic Proton donor. N-linked (GlcNAc...) asparagine glycosylation occurs at asparagine 272. Glutamate 320 functions as the Nucleophile in the catalytic mechanism.

This sequence belongs to the glycosyl hydrolase 5 (cellulase A) family.

The protein localises to the secreted. It carries out the reaction Random hydrolysis of (1-&gt;6)-linkages in (1-&gt;6)-beta-D-glucans.. Beta-glucanases participate in the metabolism of beta-glucan, the main structural component of the cell wall. Acts on lutean, pustulan and 1,6-oligo-beta-D-glucosides. This Neosartorya fischeri (strain ATCC 1020 / DSM 3700 / CBS 544.65 / FGSC A1164 / JCM 1740 / NRRL 181 / WB 181) (Aspergillus fischerianus) protein is Probable glucan endo-1,6-beta-glucosidase B (exgB).